The primary structure comprises 410 residues: MKHPIHVTSEIGELQTVLLKRPGKEVENLTPDYLQQLLFDDIPYLPIIQKEHDYFAQTLRNRGVEVLYLEKLAAEALVDKKLREEFVDRILKEGQADVNVAHQTLKEYLLSFSNEELIQKIMGGVRKNEIETSKKTHLYELMEDHYPFYLDPMPNLYFTRDPAASVGDGLTINKMREPARRRESLFMEYIIKYHPRFEKHNVPIWLDRDYKFPIEGGDELILNEETIAIGVSARTSAKAIERLAKNLFSRQNKIKKVLAIEIPKCRAFMHLDTVFTMVDYDKFTIHPAIQGPKGNMNIYILEKGSDEETLKITHRTSLMEALKEVLGLSELVLIPCGGGDVIASAREQWNDGSNTLAIAPGVVVTYDRNYVSNTLLREHGIEVIEVLSSELSRGRGGPRCMSMPIVRKDI.

The Amidino-cysteine intermediate role is filled by Cys-400.

Belongs to the arginine deiminase family.

The protein localises to the cytoplasm. The enzyme catalyses L-arginine + H2O = L-citrulline + NH4(+). It participates in amino-acid degradation; L-arginine degradation via ADI pathway; carbamoyl phosphate from L-arginine: step 1/2. This Bacillus cereus (strain ATCC 10987 / NRS 248) protein is Arginine deiminase.